A 77-amino-acid polypeptide reads, in one-letter code: Acyl carrier protein (77 aa).

The 76-residue stretch at 1-76 (MADFEKIKSI…DVIKFIDKLK (76 aa)) folds into the Carrier domain. The residue at position 36 (Ser-36) is an O-(pantetheine 4'-phosphoryl)serine.

It belongs to the acyl carrier protein (ACP) family. Post-translationally, 4'-phosphopantetheine is transferred from CoA to a specific serine of apo-ACP by AcpS. This modification is essential for activity because fatty acids are bound in thioester linkage to the sulfhydryl of the prosthetic group.

It localises to the cytoplasm. Its pathway is lipid metabolism; fatty acid biosynthesis. In terms of biological role, carrier of the growing fatty acid chain in fatty acid biosynthesis. The protein is Acyl carrier protein of Leptospira biflexa serovar Patoc (strain Patoc 1 / Ames).